Reading from the N-terminus, the 322-residue chain is Lactamase-like protein nscB (322 aa).

Zn(2+) contacts are provided by His97, His99, Asp101, and His102. The Proton donor/acceptor role is filled by Asp101.

It belongs to the metallo-beta-lactamase superfamily. Zn(2+) is required as a cofactor.

It participates in secondary metabolite biosynthesis. Its function is as follows. Lactamase-like protein; part of the gene cluster that mediates the biosynthesis of neosartoricin B, a prenylated anthracenone that probably exhibits T-cell antiproliferative activity, suggestive of a physiological role as an immunosuppressive agent. The non-reducing polyketide synthase nscA probably synthesizes and cyclizes the decaketide backbone. The hydrolase nscB then mediates the product release through hydrolysis followed by spontaneous decarboxylation. The prenyltransferase nscD catalyzes the addition of the dimethylallyl group to the aromatic C5. The FAD-dependent monooxygenase nscC is then responsible for the stereospecific hydroxylation at C2. Neosartoricin B can be converted into two additional compounds neosartoricins C and D. Neosartoricin C is a spirocyclic compound that is cyclized through the attack of C3 hydroxyl on C14, followed by dehydration. On the other hand, neosartoricin D is a further cyclized compound in which attack of C2 on C14 in neosartoricin C results in the formation of the acetal-containing dioxabicyclo-octanone ring. Both of these compounds are novel and possibly represent related metabolites of the gene cluster. In Trichophyton rubrum (strain ATCC MYA-4607 / CBS 118892) (Athlete's foot fungus), this protein is Lactamase-like protein nscB.